Reading from the N-terminus, the 356-residue chain is Peptide chain release factor 1 (356 aa).

Residue Gln-233 is modified to N5-methylglutamine.

Belongs to the prokaryotic/mitochondrial release factor family. In terms of processing, methylated by PrmC. Methylation increases the termination efficiency of RF1.

The protein resides in the cytoplasm. Functionally, peptide chain release factor 1 directs the termination of translation in response to the peptide chain termination codons UAG and UAA. The sequence is that of Peptide chain release factor 1 (prfA) from Bacillus subtilis (strain 168).